Here is a 792-residue protein sequence, read N- to C-terminus: Kinesin-related protein 2 (792 aa).

2 disordered regions span residues 22–50 (TINS…PPST) and 162–183 (NNIN…SPVQ). The span at 34–50 (ASSSSQSNDRISYPPST) shows a compositional bias: polar residues. The stretch at 284 to 423 (RLSLSIQDIK…LEKSRSDEKV (140 aa)) forms a coiled coil. The Kinesin motor domain occupies 437–781 (NIRVFCRIRP…LRFAAKVNSC (345 aa)). 528–535 (GQTGSGKT) serves as a coordination point for ATP.

It belongs to the TRAFAC class myosin-kinesin ATPase superfamily. Kinesin family. NCD subfamily.

It is found in the nucleus. Its subcellular location is the cytoplasm. The protein resides in the cytoskeleton. The protein localises to the spindle. Functionally, microtubule-dependent motor that is probably involved in microtubule organization in the mitotic spindle. The polypeptide is Kinesin-related protein 2 (kif2) (Dictyostelium discoideum (Social amoeba)).